The following is a 207-amino-acid chain: Transcription antitermination protein NusB (207 aa).

It belongs to the NusB family.

In terms of biological role, involved in transcription antitermination. Required for transcription of ribosomal RNA (rRNA) genes. Binds specifically to the boxA antiterminator sequence of the ribosomal RNA (rrn) operons. This chain is Transcription antitermination protein NusB, found in Trichodesmium erythraeum (strain IMS101).